A 368-amino-acid polypeptide reads, in one-letter code: Dihydroorotate dehydrogenase (quinone) (368 aa).

Residues 67–71 (AGFDK) and Thr-91 each bind FMN. Position 71 (Lys-71) interacts with substrate. Substrate is bound at residue 116–120 (NRMGF). FMN contacts are provided by Asn-146 and Asn-179. Asn-179 contacts substrate. Ser-182 serves as the catalytic Nucleophile. Asn-184 contacts substrate. The FMN site is built by Lys-222 and Thr-250. Substrate is bound at residue 251-252 (NT). Residues Gly-276, Gly-305, and 326–327 (YS) contribute to the FMN site.

Belongs to the dihydroorotate dehydrogenase family. Type 2 subfamily. Monomer. Requires FMN as cofactor.

It localises to the cell membrane. It carries out the reaction (S)-dihydroorotate + a quinone = orotate + a quinol. The protein operates within pyrimidine metabolism; UMP biosynthesis via de novo pathway; orotate from (S)-dihydroorotate (quinone route): step 1/1. In terms of biological role, catalyzes the conversion of dihydroorotate to orotate with quinone as electron acceptor. The chain is Dihydroorotate dehydrogenase (quinone) from Streptomyces avermitilis (strain ATCC 31267 / DSM 46492 / JCM 5070 / NBRC 14893 / NCIMB 12804 / NRRL 8165 / MA-4680).